Consider the following 134-residue polypeptide: Profilin-3 (134 aa).

Residues Cys-13 and Cys-118 are joined by a disulfide bond. Positions Ala-84 to Thr-100 match the Involved in PIP2 interaction motif. Thr-114 is modified (phosphothreonine).

The protein belongs to the profilin family. In terms of assembly, occurs in many kinds of cells as a complex with monomeric actin in a 1:1 ratio. In terms of processing, phosphorylated by MAP kinases.

It localises to the cytoplasm. The protein localises to the cytoskeleton. Its function is as follows. Binds to actin and affects the structure of the cytoskeleton. At high concentrations, profilin prevents the polymerization of actin, whereas it enhances it at low concentrations. This chain is Profilin-3, found in Olea europaea (Common olive).